A 171-amino-acid polypeptide reads, in one-letter code: Disulfide bond formation protein B (171 aa).

At 1 to 10 (MQRLLTYRAL) the chain is on the cytoplasmic side. Residues 11-27 (NFILFIASVVAMLFAII) traverse the membrane as a helical segment. Residues 28–46 (FLQNYKGLEPCPLCIFQRI) lie on the Periplasmic side of the membrane. An intrachain disulfide couples C38 to C41. The chain crosses the membrane as a helical span at residues 47-63 (GLMVMGGFSLIAAVGHP). Over 64–70 (KKMGMQL) the chain is Cytoplasmic. A helical transmembrane segment spans residues 71–88 (LLWIGSMAGILWSAGVAA). Residues 89 to 145 (RHVWIQHLPADQVPACGPGLDYFLEALPMKQVINQVLSGSGECAEISWRFLGLSIPE) are Periplasmic-facing. The cysteines at positions 104 and 131 are disulfide-linked. The chain crosses the membrane as a helical span at residues 146-164 (QALILFTALILVNLLVLWR). At 165-171 (IISKRTA) the chain is on the cytoplasmic side.

It belongs to the DsbB family.

The protein resides in the cell inner membrane. Required for disulfide bond formation in some periplasmic proteins. Acts by oxidizing the DsbA protein. The chain is Disulfide bond formation protein B from Psychrobacter sp. (strain PRwf-1).